Consider the following 109-residue polypeptide: uncharacterized protein (109 aa).

This is an uncharacterized protein from Enterobacteriaceae (Bacteriophage P2).